Here is a 598-residue protein sequence, read N- to C-terminus: Kinetochore-associated protein KNL-2 homolog (598 aa).

One can recognise an SANTA domain in the interval 19-111; the sequence is VVLRDWWLIK…IFGFPPCWER (93 aa). Composition is skewed to basic and acidic residues over residues 335–344 and 371–381; these read AKSSKPEKKG and KSAENKRKIDA. Disordered regions lie at residues 335–403, 445–500, 520–542, and 572–598; these read AKSS…NNAK, KESL…EEAE, PEKK…QKRS, and KDGS…LKIK. A compositionally biased stretch (polar residues) spans 383 to 392; it reads KLQSPTSNVA. Polar residues predominate over residues 527–539; sequence QKTNAASTDSLGQ. Residues 538-572 form a required for localization at centromeres region; that stretch reads GQKRSRSGRVLVSSLEFWRNQIPVYDMDRNLIQVK.

The protein belongs to the KNL2 family. In terms of tissue distribution, expressed in shoot apical meristem, leaf primordia, basal parts of emerging leaves, inflorescence meristems, young inflorescences, developing flower buds, developing sepals and pistils, styles and young siliques.

It localises to the nucleus. The protein resides in the nucleoplasm. Its subcellular location is the nuclear body. The protein localises to the nucleolus. It is found in the chromosome. It localises to the centromere. In terms of biological role, involved in recognition of centromeres and centromeric localization of the centromere-specific histone CENH3. Required for normal progression of mitosis and meiosis. May play a role in the determination of the epigenetic status of centromeres. Binds DNA and RNA in vitro. This Arabidopsis thaliana (Mouse-ear cress) protein is Kinetochore-associated protein KNL-2 homolog.